The chain runs to 167 residues: U-scoloptoxin(08)-Er5b (167 aa).

The first 22 residues, methionine 1–glycine 22, serve as a signal peptide directing secretion. Residues glutamate 23–arginine 94 constitute a propeptide that is removed on maturation. RLWRNWE repeat units lie at residues arginine 34 to glutamate 40, arginine 61 to glutamate 67, and arginine 86 to glutamate 92. Position 95 is a pyrrolidone carboxylic acid (glutamine 95). One copy of the RLWRNWE 4; approximate repeat lies at glutamate 107–glutamate 113. The propeptide occupies tryptophan 112 to arginine 118. Glutamine 119 is modified (pyrrolidone carboxylic acid). Residues arginine 134–glutamate 140 form an RLWRNWE 5 repeat. The propeptide occupies tryptophan 139–glutamate 167. The disordered stretch occupies residues arginine 147 to glutamate 167.

Belongs to the scoloptoxin-08 family. As to expression, expressed by the venom gland.

The protein resides in the secreted. This chain is U-scoloptoxin(08)-Er5b, found in Ethmostigmus rubripes (Giant centipede).